A 131-amino-acid chain; its full sequence is MSWQAYVDDHLMCDIDGNRLTAAAILGQDGSVWSQSASFPAFKPEEIAAILKDFDQPGTLAPTGLFLGGTKYMVIQGEPGAVIRGKKGSGGITIKKTSQALLIGIYDEPVTPGQCNIVVERLGDYLIEQGL.

Belongs to the profilin family. In terms of assembly, occurs in many kinds of cells as a complex with monomeric actin in a 1:1 ratio.

Its subcellular location is the cytoplasm. It is found in the cytoskeleton. Functionally, binds to actin and affects the structure of the cytoskeleton. At high concentrations, profilin prevents the polymerization of actin, whereas it enhances it at low concentrations. By binding to PIP2, it inhibits the formation of IP3 and DG. The polypeptide is Profilin-3 (Malus domestica (Apple)).